Reading from the N-terminus, the 158-residue chain is Phosphopantetheine adenylyltransferase (158 aa).

Substrate is bound at residue Thr10. Residues 10 to 11 (TF) and His18 contribute to the ATP site. Substrate-binding residues include Lys42, Leu74, and Arg88. Residues 89–91 (GLR), Glu99, and 124–130 (NSFISST) contribute to the ATP site.

It belongs to the bacterial CoaD family. Homohexamer. Requires Mg(2+) as cofactor.

The protein resides in the cytoplasm. It carries out the reaction (R)-4'-phosphopantetheine + ATP + H(+) = 3'-dephospho-CoA + diphosphate. It functions in the pathway cofactor biosynthesis; coenzyme A biosynthesis; CoA from (R)-pantothenate: step 4/5. Its function is as follows. Reversibly transfers an adenylyl group from ATP to 4'-phosphopantetheine, yielding dephospho-CoA (dPCoA) and pyrophosphate. This is Phosphopantetheine adenylyltransferase from Shewanella loihica (strain ATCC BAA-1088 / PV-4).